A 214-amino-acid chain; its full sequence is 2-phospho-L-lactate guanylyltransferase (214 aa).

This sequence belongs to the CofC family. Homodimer.

The enzyme catalyses (2S)-2-phospholactate + GTP + H(+) = (2S)-lactyl-2-diphospho-5'-guanosine + diphosphate. It participates in cofactor biosynthesis; coenzyme F420 biosynthesis. Functionally, guanylyltransferase that catalyzes the activation of (2S)-2-phospholactate (2-PL) as (2S)-lactyl-2-diphospho-5'-guanosine, via the condensation of 2-PL with GTP. It is involved in the biosynthesis of coenzyme F420, a hydride carrier cofactor. The protein is 2-phospho-L-lactate guanylyltransferase of Methanoregula boonei (strain DSM 21154 / JCM 14090 / 6A8).